The following is a 138-amino-acid chain: Acidic phospholipase A2 BmooPLA2 (138 aa).

A signal peptide spans 1-16 (MRTLWIVAVLLLGVEG). 7 disulfides stabilise this stretch: C42–C131, C44–C60, C59–C111, C65–C138, C66–C104, C73–C97, and C91–C102. 3 residues coordinate Ca(2+): Y43, G45, and G47. Residue H63 is part of the active site. Position 64 (D64) interacts with Ca(2+). D105 is a catalytic residue.

The protein belongs to the phospholipase A2 family. Group II subfamily. D49 sub-subfamily. The cofactor is Ca(2+). Expressed by the venom gland.

It is found in the secreted. It catalyses the reaction a 1,2-diacyl-sn-glycero-3-phosphocholine + H2O = a 1-acyl-sn-glycero-3-phosphocholine + a fatty acid + H(+). Snake venom phospholipase A2 (PLA2) that inhibits ADP- and collagen-induced platelet aggregation, has edema-inducing, anti-coagulant activity, antibacterial activity, and cytotoxic activity. In vivo, has a hypotensive effect. PLA2 catalyzes the calcium-dependent hydrolysis of the 2-acyl groups in 3-sn-phosphoglycerides. This chain is Acidic phospholipase A2 BmooPLA2, found in Bothrops moojeni (Lance-headed viper).